The chain runs to 1516 residues: UDP-glucose:glycoprotein glucosyltransferase 2 (1516 aa).

The signal sequence occupies residues 1–27 (MAPAKATNVVRLLLGSTALWLSQLGSG). N-linked (GlcNAc...) asparagine glycosylation is found at N256, N286, N920, and N950. Positions 1220 to 1516 (LHKENKKEKD…QDTILTHDEL (297 aa)) are glucosyltransferase. Y1289 bears the Phosphotyrosine mark. Residues 1513-1516 (HDEL) carry the Prevents secretion from ER motif.

The protein belongs to the glycosyltransferase 8 family. As to quaternary structure, interacts with METTL23. Interacts with SELENOF. Requires Ca(2+) as cofactor. It depends on Mn(2+) as a cofactor. In terms of tissue distribution, higher levels in kidney, pancreas, heart, and skeletal muscle.

The protein resides in the endoplasmic reticulum lumen. It is found in the endoplasmic reticulum-Golgi intermediate compartment. The catalysed reaction is N(4)-(alpha-D-Man-(1-&gt;2)-alpha-D-Man-(1-&gt;2)-alpha-D-Man-(1-&gt;3)-[alpha-D-Man-(1-&gt;2)-alpha-D-Man-(1-&gt;3)-[alpha-D-Man-(1-&gt;2)-alpha-D-Man-(1-&gt;6)]-alpha-D-Man-(1-&gt;6)]-beta-D-Man-(1-&gt;4)-beta-D-GlcNAc-(1-&gt;4)-beta-D-GlcNAc)-L-asparaginyl-[protein] (N-glucan mannose isomer 9A1,2,3B1,2,3) + UDP-alpha-D-glucose = N(4)-(alpha-D-Glc-(1-&gt;3)-alpha-D-Man-(1-&gt;2)-alpha-D-Man-(1-&gt;2)-alpha-D-Man-(1-&gt;3)-[alpha-D-Man-(1-&gt;2)-alpha-D-Man-(1-&gt;3)-[alpha-D-Man-(1-&gt;2)-alpha-D-Man-(1-&gt;6)]-alpha-D-Man-(1-&gt;6)]-beta-D-Man-(1-&gt;4)-beta-D-GlcNAc-(1-&gt;4)-beta-D-GlcNAc)-L-asparaginyl-[protein] + UDP + H(+). It participates in protein modification; protein glycosylation. With respect to regulation, ethylenediaminetetraacetic acid completely abolishes catalytic activity. Catalytic activity is enhanced by complex formation with SELENOF. Functionally, recognizes glycoproteins with minor folding defects. Reglucosylates single N-glycans near the misfolded part of the protein, thus providing quality control for protein folding in the endoplasmic reticulum. Reglucosylated proteins are recognized by calreticulin for recycling to the endoplasmic reticulum and refolding or degradation. This is UDP-glucose:glycoprotein glucosyltransferase 2 (UGGT2) from Homo sapiens (Human).